A 1444-amino-acid polypeptide reads, in one-letter code: RNA-directed RNA polymerase P1 (1444 aa).

A disordered region spans residues 157 to 181 (EEIQMDESQSDKRRRKKRMEKSRPV). In terms of domain architecture, RdRp catalytic spans 690 to 897 (LGVGFATLYQ…KTVISHISGE (208 aa)).

This sequence belongs to the reoviridae RNA-directed RNA polymerase family.

It is found in the virion. The protein resides in the host cytoplasm. The catalysed reaction is RNA(n) + a ribonucleoside 5'-triphosphate = RNA(n+1) + diphosphate. In terms of biological role, RNA-directed RNA polymerase that is involved in both transcription and genome replication. Together with the capping enzyme P5 and protein P7, forms an enzyme complex positioned near the channels situated at each of the five-fold vertices of the core. In Rice dwarf virus (isolate Akita) (RDV), this protein is RNA-directed RNA polymerase P1.